The sequence spans 136 residues: Small ribosomal subunit protein uS9 (136 aa).

This sequence belongs to the universal ribosomal protein uS9 family.

The sequence is that of Small ribosomal subunit protein uS9 from Borrelia recurrentis (strain A1).